The sequence spans 215 residues: Ribosomal RNA small subunit methyltransferase G (215 aa).

Residues Gly-78, Leu-83, 128-129, and Arg-146 each bind S-adenosyl-L-methionine; that span reads AE.

This sequence belongs to the methyltransferase superfamily. RNA methyltransferase RsmG family.

It localises to the cytoplasm. The catalysed reaction is guanosine(527) in 16S rRNA + S-adenosyl-L-methionine = N(7)-methylguanosine(527) in 16S rRNA + S-adenosyl-L-homocysteine. Functionally, specifically methylates the N7 position of guanine in position 527 of 16S rRNA. The chain is Ribosomal RNA small subunit methyltransferase G from Anaeromyxobacter sp. (strain Fw109-5).